Here is a 592-residue protein sequence, read N- to C-terminus: Laccase PFICI_06862 (592 aa).

The signal sequence occupies residues 1–19 (MYIQTQFASLLLLAGTSLA). An N-linked (GlcNAc...) asparagine glycan is attached at asparagine 26. 2 consecutive Plastocyanin-like domains span residues 32–142 (QWSS…WIAP) and 173–350 (VVIS…RYPG). Cu cation-binding residues include histidine 78, histidine 80, histidine 123, and histidine 125. N-linked (GlcNAc...) asparagine glycans are attached at residues asparagine 370, asparagine 407, and asparagine 454. The 119-residue stretch at 445 to 563 (SDVQGGSMQN…AGQQVVLLEG (119 aa)) folds into the Plastocyanin-like 3 domain. Histidine 475 serves as a coordination point for Cu cation. An N-linked (GlcNAc...) asparagine glycan is attached at asparagine 524.

The protein belongs to the multicopper oxidase family.

The protein localises to the cell surface. The protein operates within pigment biosynthesis; melanin biosynthesis. Its function is as follows. Laccase involved the biosynthesis of dihydroxynaphthalene (DHN)-melanin, a bluish-green pigment forming a dark layer in the conidial wall that protects the conidia from UV radiations. The first step of the pathway is the production of the pentaketide 1,3,6,8-tetrahydroxynaphthalene (1,3,6,8-THN or T4HN) by the polyketide synthase PfmaE though condensation of acetyl-CoA with malonyl-CoA. T4HN is not stable and easily oxidizes into the stable form flaviolin. T4HN is also substrate of the hydroxynaphthalene reductase PfmaG to yield scytalone. The scytalone dehydratase PfmaJ then reduces scytalone to 1,3,8-THN. 1,3,8-THN is then substrate of the hydroxynaphthalene reductase PfmaI to yield vermelone. Vermelone is further converted by the multicopper oxidase PfmaD to 1,8-DHN. Finally the laccase PFICI_06862 transforms 1,8-DHN to DHN-melanin. The roles of the 5-oxoprolinase PfmaA and the proline iminopeptidase PfmaB within the cluster have not been elucidated yet. The chain is Laccase PFICI_06862 from Pestalotiopsis fici (strain W106-1 / CGMCC3.15140).